The sequence spans 262 residues: Membrane protein US15 (262 aa).

A run of 7 helical transmembrane segments spans residues 46 to 66 (GAVGWQLAGLTALLSAFCYAA), 77 to 97 (CLTESSPSLVFVIPVTSVIFI), 108 to 128 (IGVLLFYTLLHVPPLIVICLC), 133 to 153 (LVISAALFTLLAFLSCTGVAL), 163 to 183 (QIVVIHALITLTFTAIVVVIL), 186 to 206 (GWSWCFKIVLSFSVLITCLAV), and 226 to 246 (LLAAVKVFLSLVFTLLMVLRI).

This sequence belongs to the HHV-5 US12 protein family.

The protein resides in the host membrane. The sequence is that of Membrane protein US15 (US15) from Human cytomegalovirus (strain Merlin) (HHV-5).